The primary structure comprises 522 residues: Poly(A) polymerase (522 aa).

Residues 63-65 (YGS), 76-78 (DID), Asp130, Lys193, Tyr202, and 211-212 (GI) contribute to the ATP site. Positions 76, 78, and 130 each coordinate Mg(2+). The segment at 475 to 522 (QLKAKEENSIPNEEKKEQLKKEMKQEANTIVKNSSTDDDFMKRFTRKN) is disordered. Basic and acidic residues predominate over residues 476-499 (LKAKEENSIPNEEKKEQLKKEMKQ).

The protein belongs to the poly(A) polymerase family. Requires Mg(2+) as cofactor. Mn(2+) is required as a cofactor.

The protein resides in the cytoplasm. The protein localises to the nucleus. The enzyme catalyses RNA(n) + ATP = RNA(n)-3'-adenine ribonucleotide + diphosphate. Polymerase that creates the 3'-poly(A) tail of mRNA's. May acquire specificity through interaction with a cleavage and polyadenylation factor. The polypeptide is Poly(A) polymerase (Entamoeba histolytica (strain ATCC 30459 / HM-1:IMSS / ABRM)).